Here is a 288-residue protein sequence, read N- to C-terminus: Sulfur carrier protein FdhD (288 aa).

The tract at residues 1 to 23 (MMRCMQSPEVHPAAAGDAEPPTH) is disordered. Cysteine 127 serves as the catalytic Cysteine persulfide intermediate.

It belongs to the FdhD family.

It localises to the cytoplasm. Functionally, required for formate dehydrogenase (FDH) activity. Acts as a sulfur carrier protein that transfers sulfur from IscS to the molybdenum cofactor prior to its insertion into FDH. This Cupriavidus necator (strain ATCC 17699 / DSM 428 / KCTC 22496 / NCIMB 10442 / H16 / Stanier 337) (Ralstonia eutropha) protein is Sulfur carrier protein FdhD.